A 481-amino-acid polypeptide reads, in one-letter code: Protein DETOXIFICATION 12 (481 aa).

12 helical membrane-spanning segments follow: residues 38 to 58 (LIFF…LQIV), 76 to 96 (LASS…SCAL), 117 to 137 (YTAM…WFNM), 154 to 174 (AGKY…LQPL), 187 to 207 (LLIT…FLVY), 214 to 234 (LGGA…LGSF), 267 to 287 (AAMI…SGLL), 296 to 316 (VLSV…AIAA), 336 to 356 (IVVY…SMSL), 380 to 400 (MAPL…LSGI), 415 to 435 (LGAF…WIHL), and 438 to 458 (VGLW…LALV).

The protein belongs to the multi antimicrobial extrusion (MATE) (TC 2.A.66.1) family.

It localises to the membrane. This Arabidopsis thaliana (Mouse-ear cress) protein is Protein DETOXIFICATION 12.